We begin with the raw amino-acid sequence, 462 residues long: MYKILSSFVAGVAIGSGLVITYVLYNVPEPPELDLQRWWGIGTRPTEEDKSIRPFSIDFNDTVILDLKERLKNRRPFTKPLEGINSEYGMNTEYLETVLEYWLNEYNFKKRAELLNKFPHYKTRIQGLDLHFIRVKPEIKEGVQVLPLLMMHGWPSSSKEFDKVIPILTTPKHEYNIVFEVVAVDLPGYGFSEGTNKPGLNPVQIGVMMRNLMLRLGFEKFYIQAGDWGSQCATHMATLFPDQVLGLHTNMPLSSRPLSTVKLFIGALFPSLIVDAKYMDRIYPLKNLFSYILRETGYFHIQATKPDTIGVALTDSPAGLAGYLIEKMAICSNRDQLDTPHGGLENLNLDDVLDTVTINWINNCIVTSTRLYAEGFSWPEVLIVHRIPSMVPTAGINFKYEVLYQPDWILRDKFPNLVRSTVLDFGGHFAALHTPQALADDIFASAVQFLKFHDRKRNQKSS.

The chain crosses the membrane as a helical span at residues 4–24 (ILSSFVAGVAIGSGLVITYVL). Catalysis depends on Asp227, which acts as the Nucleophile. Tyr372 acts as the Proton donor in catalysis. The active-site Proton acceptor is His428.

This sequence belongs to the peptidase S33 family.

Its subcellular location is the microsome membrane. The protein resides in the endoplasmic reticulum membrane. The enzyme catalyses cis-stilbene oxide + H2O = (1R,2R)-hydrobenzoin. It carries out the reaction 1-(4-methoxyphenyl)-N-methyl-N-[(3-methyloxetan-3-yl)methyl]methanamine + H2O = 2-{[(4-methoxybenzyl)(methyl)amino]methyl}-2-methylpropane-1,3-diol. Functionally, catalyzes juvenile hormone hydrolysis. The polypeptide is Juvenile hormone epoxide hydrolase (Manduca sexta (Tobacco hawkmoth)).